The chain runs to 446 residues: C4-dicarboxylate transport protein 2 (446 aa).

Transmembrane regions (helical) follow at residues 7–26, 46–64, 77–99, 152–171, 192–211, 221–243, 291–313, 318–340, 353–375, and 381–403; these read PLFG…GIWA, MLIA…CGAG, VIYF…YAFG, ILQV…LLGE, AVVI…FTVG, LGFL…LGGI, VVGL…YLTL, IAQA…VALI, IVIL…VLVL, and IGIA…IAAW.

The protein belongs to the dicarboxylate/amino acid:cation symporter (DAACS) (TC 2.A.23) family.

It localises to the cell inner membrane. Responsible for the transport of dicarboxylates such as succinate, fumarate, and malate from the periplasm across the membrane. This Ralstonia nicotianae (strain ATCC BAA-1114 / GMI1000) (Ralstonia solanacearum) protein is C4-dicarboxylate transport protein 2 (dctA2).